The primary structure comprises 376 residues: Putative C-mannosyltransferase DPY19L2P2 (376 aa).

N-linked (GlcNAc...) asparagine glycosylation is present at Asn32. A run of 6 helical transmembrane segments spans residues 52–72 (ACFY…LFFI), 107–127 (LRES…TLIL), 154–174 (AQFI…VGYI), 182–202 (IIYM…GNSM), 233–253 (LNCW…LKFL), and 299–319 (LLIY…CFIF).

This sequence belongs to the dpy-19 family. Fibroblast, lung, lymphoblast, spleen and testis.

It is found in the membrane. In terms of biological role, probable C-mannosyltransferase that mediates C-mannosylation of tryptophan residues on target proteins. This Homo sapiens (Human) protein is Putative C-mannosyltransferase DPY19L2P2 (DPY19L2P2).